Reading from the N-terminus, the 410-residue chain is Chitinase-3-like protein 1 (410 aa).

Residues methionine 1–alanine 48 form the signal peptide. Residues tyrosine 49–threonine 410 form the GH18 domain. Cysteine 53 and cysteine 78 are disulfide-bonded. The N-linked (GlcNAc...) asparagine glycan is linked to asparagine 87. Chitin contacts are provided by residues glutamate 97–tryptophan 98, glycine 124–asparagine 127, tyrosine 168, methionine 231–aspartate 234, and arginine 290. A disulfide bridge connects residues cysteine 327 and cysteine 391. The interval glutamine 351–valine 365 is important for AKT1 activation and IL8 production. Tryptophan 379 provides a ligand contact to chitin.

Belongs to the glycosyl hydrolase 18 family. As to quaternary structure, monomer.

The protein resides in the secreted. It localises to the extracellular space. It is found in the cytoplasm. Its subcellular location is the perinuclear region. The protein localises to the endoplasmic reticulum. Functionally, carbohydrate-binding lectin with a preference for chitin. Has no chitinase activity. May play a role in tissue remodeling and in the capacity of cells to respond to and cope with changes in their environment. Plays a role in T-helper cell type 2 (Th2) inflammatory response and IL-13-induced inflammation, regulating allergen sensitization, inflammatory cell apoptosis, dendritic cell accumulation and M2 macrophage differentiation. Facilitates invasion of pathogenic enteric bacteria into colonic mucosa and lymphoid organs. Mediates activation of AKT1 signaling pathway and subsequent IL8 production in colonic epithelial cells. Regulates antibacterial responses in lung by contributing to macrophage bacterial killing, controlling bacterial dissemination and augmenting host tolerance. Also regulates hyperoxia-induced injury, inflammation and epithelial apoptosis in lung. In Pongo abelii (Sumatran orangutan), this protein is Chitinase-3-like protein 1 (CHI3L1).